Consider the following 32-residue polypeptide: Turripeptide XIV-18 (32 aa).

Isoleucine amide is present on I30.

Contains 2 disulfide bonds. As to expression, expressed by the venom duct.

It localises to the secreted. In Gemmula speciosa (Splendid gem-turris), this protein is Turripeptide XIV-18.